Reading from the N-terminus, the 226-residue chain is Probable septum site-determining protein MinC (226 aa).

Belongs to the MinC family. As to quaternary structure, interacts with MinD and FtsZ.

Cell division inhibitor that blocks the formation of polar Z ring septums. Rapidly oscillates between the poles of the cell to destabilize FtsZ filaments that have formed before they mature into polar Z rings. Prevents FtsZ polymerization. In Bacillus velezensis (strain DSM 23117 / BGSC 10A6 / LMG 26770 / FZB42) (Bacillus amyloliquefaciens subsp. plantarum), this protein is Probable septum site-determining protein MinC.